The chain runs to 369 residues: Epoxyqueuosine reductase (369 aa).

Catalysis depends on Asp135, which acts as the Proton donor. One can recognise a 4Fe-4S ferredoxin-type domain in the interval 177-209 (IPLPVDEPSENQCGKCTACITSCPTNAIVAEGV). The [4Fe-4S] cluster site is built by Cys189, Cys192, Cys195, Cys199, Cys215, Cys242, Cys245, and Cys249.

Belongs to the QueG family. Monomer. It depends on cob(II)alamin as a cofactor. The cofactor is [4Fe-4S] cluster.

It localises to the cytoplasm. It catalyses the reaction epoxyqueuosine(34) in tRNA + AH2 = queuosine(34) in tRNA + A + H2O. It participates in tRNA modification; tRNA-queuosine biosynthesis. Catalyzes the conversion of epoxyqueuosine (oQ) to queuosine (Q), which is a hypermodified base found in the wobble positions of tRNA(Asp), tRNA(Asn), tRNA(His) and tRNA(Tyr). This chain is Epoxyqueuosine reductase, found in Vibrio cholerae serotype O1 (strain ATCC 39315 / El Tor Inaba N16961).